A 52-amino-acid polypeptide reads, in one-letter code: uncharacterized protein (52 aa).

The interval Met-1–Met-52 is disordered. The segment covering Lys-16–Lys-25 has biased composition (basic and acidic residues). A compositionally biased stretch (gly residues) spans Pro-27 to Met-52.

This is an uncharacterized protein from Dictyostelium discoideum (Social amoeba).